The following is an 874-amino-acid chain: Valine--tRNA ligase (874 aa).

Positions 46 to 56 match the 'HIGH' region motif; it reads PNVTGHLHIGH. The 'KMSKS' region motif lies at 523 to 527; it reads KMSKS. Lys-526 is a binding site for ATP. Residues 805–874 adopt a coiled-coil conformation; sequence DYVFQMKKAS…TLTDLKQKVK (70 aa).

The protein belongs to the class-I aminoacyl-tRNA synthetase family. ValS type 1 subfamily. Monomer.

It is found in the cytoplasm. The catalysed reaction is tRNA(Val) + L-valine + ATP = L-valyl-tRNA(Val) + AMP + diphosphate. Catalyzes the attachment of valine to tRNA(Val). As ValRS can inadvertently accommodate and process structurally similar amino acids such as threonine, to avoid such errors, it has a 'posttransfer' editing activity that hydrolyzes mischarged Thr-tRNA(Val) in a tRNA-dependent manner. The sequence is that of Valine--tRNA ligase from Ureaplasma parvum serovar 3 (strain ATCC 700970).